Consider the following 745-residue polypeptide: Polyribonucleotide nucleotidyltransferase (745 aa).

Mg(2+)-binding residues include Asp487 and Asp493. The 60-residue stretch at Pro554 to Ile613 folds into the KH domain. One can recognise an S1 motif domain in the interval Gly623–Lys691. Residues Lys691–Asn745 are disordered. Over residues Asn707–Asp719 the composition is skewed to basic and acidic residues.

Belongs to the polyribonucleotide nucleotidyltransferase family. It depends on Mg(2+) as a cofactor.

It localises to the cytoplasm. The catalysed reaction is RNA(n+1) + phosphate = RNA(n) + a ribonucleoside 5'-diphosphate. In terms of biological role, involved in mRNA degradation. Catalyzes the phosphorolysis of single-stranded polyribonucleotides processively in the 3'- to 5'-direction. This is Polyribonucleotide nucleotidyltransferase from Rickettsia massiliae (strain Mtu5).